The following is a 490-amino-acid chain: Adenylyltransferase and sulfurtransferase uba4 (490 aa).

The segment at 33-54 (EAAKTPPYSDSTETDRGSSSST) is disordered. Residues Gly-96, Asp-117, 124-128 (SNLHR), Lys-141, and 185-186 (DH) contribute to the ATP site. Cys-234 and Cys-237 together coordinate Zn(2+). The Glycyl thioester intermediate; for adenylyltransferase activity role is filled by Cys-251. Zn(2+)-binding residues include Cys-323 and Cys-326. Residues 379-488 (EHGKPVLLDV…WKREVDSTLP (110 aa)) enclose the Rhodanese domain. Cys-443 functions as the Cysteine persulfide intermediate; for sulfurtransferase activity in the catalytic mechanism.

In the N-terminal section; belongs to the HesA/MoeB/ThiF family. UBA4 subfamily. The cofactor is Zn(2+).

The protein localises to the cytoplasm. It localises to the cytosol. The enzyme catalyses [molybdopterin-synthase sulfur-carrier protein]-C-terminal Gly-Gly + ATP + H(+) = [molybdopterin-synthase sulfur-carrier protein]-C-terminal Gly-Gly-AMP + diphosphate. It carries out the reaction [molybdopterin-synthase sulfur-carrier protein]-C-terminal Gly-Gly-AMP + S-sulfanyl-L-cysteinyl-[cysteine desulfurase] + AH2 = [molybdopterin-synthase sulfur-carrier protein]-C-terminal-Gly-aminoethanethioate + L-cysteinyl-[cysteine desulfurase] + A + AMP + 2 H(+). It functions in the pathway tRNA modification; 5-methoxycarbonylmethyl-2-thiouridine-tRNA biosynthesis. Plays a central role in 2-thiolation of mcm(5)S(2)U at tRNA wobble positions of cytosolic tRNA(Lys), tRNA(Glu) and tRNA(Gln). Also essential during biosynthesis of the molybdenum cofactor. Acts by mediating the C-terminal thiocarboxylation of sulfur carriers URM1 and MOCS2A. Its N-terminus first activates urm1 and MOCS2A as acyl-adenylates (-COAMP), then the persulfide sulfur on the catalytic cysteine is transferred to URM1 and MOCS2A to form thiocarboxylation (-COSH) of their C-terminus. The reaction probably involves hydrogen sulfide that is generated from the persulfide intermediate and that acts as a nucleophile towards URM1 and MOCS2A. Subsequently, a transient disulfide bond is formed. Does not use thiosulfate as sulfur donor; NFS1 probably acting as a sulfur donor for thiocarboxylation reactions. This chain is Adenylyltransferase and sulfurtransferase uba4, found in Pyricularia oryzae (strain 70-15 / ATCC MYA-4617 / FGSC 8958) (Rice blast fungus).